Reading from the N-terminus, the 1450-residue chain is Arf-GAP with Rho-GAP domain, ANK repeat and PH domain-containing protein 1 (1450 aa).

Residues 6–70 (DAALSVAEWL…LAGLLRAHTS (65 aa)) enclose the SAM domain. Positions 81–90 (PVPMKRHIFR) are required for interaction with SH3KBP1. 2 disordered regions span residues 89-144 (FRSP…LPPL) and 173-302 (TKEE…SSLS). A compositionally biased stretch (pro residues) spans 92–102 (PPVPATPPEPL). Residues 190–199 (QSEEPLSTLP) are compositionally biased toward low complexity. Pro residues predominate over residues 200 to 219 (QGPPQPPSPPPCPPEIPPKP). Acidic residues-rich tracts occupy residues 225–236 (EFDDSDYDEVPE) and 269–286 (EGEELSGDDQGDEEEDDH). Phosphoserine is present on Ser-229. Phosphotyrosine; by PTK6 is present on Tyr-231. Residues 327-419 (PVIKAGWLDK…WMQALQQAMA (93 aa)) enclose the PH 1 domain. The residue at position 354 (Thr-354) is a Phosphothreonine. Position 428 is a phosphoserine (Ser-428). Phosphotyrosine occurs at positions 431 and 504. The region spanning 440-529 (QPDRAGSLEL…WLEAMQGAIA (90 aa)) is the PH 2 domain. The 126-residue stretch at 535 to 660 (SEVAERIWAA…RYHPLFGNQE (126 aa)) folds into the Arf-GAP domain. The C4-type zinc finger occupies 550–576 (CADCGAPQPDWASINLCVVICKRCAGE). Ser-738 bears the Phosphoserine mark. The PH 3 domain maps to 743 to 850 (TVSHSGFLYK…WVKCIAKAFV (108 aa)). In terms of domain architecture, Rho-GAP spans 954–1139 (ASMGDTLSEQ…DLINHYVVVF (186 aa)). In terms of domain architecture, Ras-associating spans 1172–1261 (GDFICTVYLE…SHLVVKKHQA (90 aa)). Residues 1274-1396 (GDTKHGMMKF…WFATFLFVQH (123 aa)) form the PH 4 domain. Residues Ser-1428 and Ser-1435 each carry the phosphoserine modification.

In terms of assembly, interacts with SH3KBP1/CIN85 (via SH3 domains). The interaction is independent of EGF and does not affect ARAP1 GTPase-activating activity but is involved in regulating ubiquitination and endocytic trafficking of EGFR. ARAP1 competes with E3 ubiquitin-protein ligase CBL for binding to SH3KBP1, preventing interaction of CBL with SH3KBP1; this is likely to regulate SH3KBP1-mediated internalization of EGFR. Interacts with TNFRSF10A. Phosphorylated by PTK6 following EGF stimulation which enhances EGFR signaling by delaying EGFR down-regulation; the interaction is mediated by the SH2 domain of PTK6. Phosphorylation promotes association with the Golgi apparatus and endosomes. Detected in heart, skeletal muscle, spleen, kidney, liver, placenta, lung, peripheral blood leukocytes, adrenal gland, bone marrow, brain, lymph node, mammary gland, prostate, spinal cord, stomach, thyroid and trachea.

It is found in the cytoplasm. The protein localises to the golgi apparatus. The protein resides in the trans-Golgi network. It localises to the golgi stack. Its subcellular location is the cell membrane. It is found in the endosome. The protein localises to the multivesicular body. The protein resides in the cell projection. It localises to the ruffle. Its subcellular location is the podosome. It is found in the early endosome. In terms of biological role, phosphatidylinositol 3,4,5-trisphosphate-dependent GTPase-activating protein that modulates actin cytoskeleton remodeling by regulating ARF and RHO family members. Activated by phosphatidylinositol 3,4,5-trisphosphate (PtdIns(3,4,5)P3) binding and, to a lesser extent, by phosphatidylinositol 3,4-bisphosphate (PtdIns(3,4)P2) binding. Has a preference for ARF1 and ARF5. Positively regulates the ring size of circular dorsal ruffles and promotes macropinocytosis. Acts as a bridging factor in osteoclasts to control actin and membrane dynamics. Regulates the condensing of osteoclast podosomes into sealing zones which segregate the bone-facing membrane from other membrane domains and are required for osteoclast resorption activity. Also regulates recruitment of the AP-3 complex to endosomal membranes and trafficking of lysosomal membrane proteins to the ruffled membrane border of osteoclasts to modulate bone resorption. Regulates the endocytic trafficking of EGFR. Regulates the incorporation of CD63 and CD9 into multivesicular bodies. Required in the retinal pigment epithelium (RPE) for photoreceptor survival due to its role in promoting RPE phagocytosis. In Homo sapiens (Human), this protein is Arf-GAP with Rho-GAP domain, ANK repeat and PH domain-containing protein 1 (ARAP1).